The following is a 259-amino-acid chain: Ribosomal RNA small subunit methyltransferase J (259 aa).

S-adenosyl-L-methionine-binding positions include 107–108, 123–124, 159–160, and Asp177; these read RD, ER, and SS.

Belongs to the methyltransferase superfamily. RsmJ family.

Its subcellular location is the cytoplasm. It carries out the reaction guanosine(1516) in 16S rRNA + S-adenosyl-L-methionine = N(2)-methylguanosine(1516) in 16S rRNA + S-adenosyl-L-homocysteine + H(+). Its function is as follows. Specifically methylates the guanosine in position 1516 of 16S rRNA. This chain is Ribosomal RNA small subunit methyltransferase J, found in Shewanella loihica (strain ATCC BAA-1088 / PV-4).